A 107-amino-acid polypeptide reads, in one-letter code: YcgL domain-containing protein Pcryo_0807 (107 aa).

Residues Met-1–Leu-95 enclose the YcgL domain.

This chain is YcgL domain-containing protein Pcryo_0807, found in Psychrobacter cryohalolentis (strain ATCC BAA-1226 / DSM 17306 / VKM B-2378 / K5).